The sequence spans 449 residues: Flavonol 7-O-beta-glucosyltransferase UGT74F1 (449 aa).

The active-site Proton acceptor is the His18. His18 provides a ligand contact to an anthocyanidin. Residue Asp111 is the Charge relay of the active site. Thr133, Gln327, His342, Trp345, Asn346, Ser347, Glu350, Asp366, and Gln367 together coordinate UDP-alpha-D-glucose.

It belongs to the UDP-glycosyltransferase family.

It catalyses the reaction a 7-O-hydroxy-flavonol + UDP-alpha-D-glucose = a flavonol 7-O-beta-D-glucoside + UDP + H(+). Possesses quercetin 7-O-glucosyltransferase and 4'-O-glucosyltransferase activities in vitro. Also active in vitro on benzoates and benzoate derivatives. Has low affinity for the tryptophan precursor anthranilate. Catalyzes the formation of anthranilate glucose ester. Is a minor source of this activity in the plant. In Arabidopsis thaliana (Mouse-ear cress), this protein is Flavonol 7-O-beta-glucosyltransferase UGT74F1.